The following is a 69-amino-acid chain: uncharacterized protein (69 aa).

This is an uncharacterized protein from Mycobacterium bovis (strain ATCC BAA-935 / AF2122/97).